Consider the following 350-residue polypeptide: Phosphoribosylformylglycinamidine cyclo-ligase (350 aa).

Belongs to the AIR synthase family.

It localises to the cytoplasm. The enzyme catalyses 2-formamido-N(1)-(5-O-phospho-beta-D-ribosyl)acetamidine + ATP = 5-amino-1-(5-phospho-beta-D-ribosyl)imidazole + ADP + phosphate + H(+). Its pathway is purine metabolism; IMP biosynthesis via de novo pathway; 5-amino-1-(5-phospho-D-ribosyl)imidazole from N(2)-formyl-N(1)-(5-phospho-D-ribosyl)glycinamide: step 2/2. The protein is Phosphoribosylformylglycinamidine cyclo-ligase of Nitratidesulfovibrio vulgaris (strain DSM 19637 / Miyazaki F) (Desulfovibrio vulgaris).